The sequence spans 991 residues: Ribonuclease TUDOR 1 (991 aa).

An N-acetylalanine modification is found at Ala2. 4 consecutive TNase-like domains span residues 8-151 (QWLK…RWSK), 186-364 (KPME…MWAN), 378-557 (QNFT…IHSA), and 587-714 (RRIP…IWEN). The segment at 227–250 (RTTNGSVVETVPDEPNGDVSAESR) is disordered. A Tudor domain is found at 782-847 (NPKRGDIVLA…RPIDPSVSAA (66 aa)). The residue at position 970 (Tyr970) is a Phosphotyrosine. The tract at residues 971-991 (GDIESDDEDTGPARKPAGGRR) is disordered. Ser975 is subject to Phosphoserine. The residue at position 980 (Thr980) is a Phosphothreonine.

In terms of tissue distribution, expressed in seeds, leaves, flowers, roots and siliques (at protein level). Accumulates in the cap and elongation zone of the root apices (at protein level).

Its subcellular location is the cytoplasm. The protein resides in the cytoplasmic granule. It localises to the perinuclear region. It is found in the endoplasmic reticulum. Its activity is regulated as follows. Repressed by the specific inhibitor 3',5'-deoxythymidine bisphosphate (pdTp); this RNase activity inhibition impairs subcellular relocation upon abiotic stress and leads to reduced stress resistance. Functionally, cytoprotective ribonuclease (RNase) required for resistance to abiotic stresses, acting as a positive regulator of mRNA decapping during stress. Essential for the integrity and function of cytoplasmic messenger ribonucleoprotein (mRNP) complexes called stress granules (SGs) and processing bodies (PBs), sites of post-transcriptional gene regulation during stress (e.g. salt and heat). Involved in gibberellic acid (GA) biosynthesis. Essential for stress tolerance, probably by regulating mRNAs entering the secretory pathway. Component of stress granules (SGs) that regulates growth under salt stress by modulating levels of GA20OX3 mRNA. Binds GA20OX3 mRNA. May inhibit the degradation of mRNAs involved in stress adaptation. The sequence is that of Ribonuclease TUDOR 1 from Arabidopsis thaliana (Mouse-ear cress).